We begin with the raw amino-acid sequence, 171 residues long: MTAICTDKTELNASWNTVSSAWLTRYPNPYSLHVVSADVLERYVDDEGRLYTERLLVKQGRLPRWASDLLNVNKSYILERSVIDPSKQELKSETFNLDHVKILRVIEYSRFIQSSENCSKTIVDTIAKFVSPLRFGLGRRVQKYSLKRFQEQLSSSRRGLLYVIQQKFQPS.

Positions 1-79 (MTAICTDKTE…LNVNKSYILE (79 aa)) are required for mitochondrial targeting. Residues 2 to 171 (TAICTDKTEL…YVIQQKFQPS (170 aa)) form the PRELI/MSF1 domain.

It localises to the mitochondrion inner membrane. It is found in the mitochondrion intermembrane space. Required for maintenance of normal mitochondrial morphology as well as PCP1-dependent processing of MGM1. The polypeptide is Protein ups1 homolog (Schizosaccharomyces pombe (strain 972 / ATCC 24843) (Fission yeast)).